The following is a 398-amino-acid chain: 4-hydroxy-3-methylbut-2-enyl diphosphate reductase (398 aa).

Cys-66 serves as a coordination point for [4Fe-4S] cluster. Position 96 (His-96) interacts with (2E)-4-hydroxy-3-methylbut-2-enyl diphosphate. His-96 serves as a coordination point for dimethylallyl diphosphate. His-96 is a binding site for isopentenyl diphosphate. Cys-157 contributes to the [4Fe-4S] cluster binding site. Residue His-185 participates in (2E)-4-hydroxy-3-methylbut-2-enyl diphosphate binding. His-185 lines the dimethylallyl diphosphate pocket. His-185 contacts isopentenyl diphosphate. Glu-187 (proton donor) is an active-site residue. Residue Thr-250 participates in (2E)-4-hydroxy-3-methylbut-2-enyl diphosphate binding. Cys-288 provides a ligand contact to [4Fe-4S] cluster. Residues Ser-317, Ser-318, Asn-319, and Ser-380 each contribute to the (2E)-4-hydroxy-3-methylbut-2-enyl diphosphate site. The dimethylallyl diphosphate site is built by Ser-317, Ser-318, Asn-319, and Ser-380. 4 residues coordinate isopentenyl diphosphate: Ser-317, Ser-318, Asn-319, and Ser-380.

Belongs to the IspH family. Requires [4Fe-4S] cluster as cofactor.

The enzyme catalyses isopentenyl diphosphate + 2 oxidized [2Fe-2S]-[ferredoxin] + H2O = (2E)-4-hydroxy-3-methylbut-2-enyl diphosphate + 2 reduced [2Fe-2S]-[ferredoxin] + 2 H(+). It catalyses the reaction dimethylallyl diphosphate + 2 oxidized [2Fe-2S]-[ferredoxin] + H2O = (2E)-4-hydroxy-3-methylbut-2-enyl diphosphate + 2 reduced [2Fe-2S]-[ferredoxin] + 2 H(+). It functions in the pathway isoprenoid biosynthesis; dimethylallyl diphosphate biosynthesis; dimethylallyl diphosphate from (2E)-4-hydroxy-3-methylbutenyl diphosphate: step 1/1. Its pathway is isoprenoid biosynthesis; isopentenyl diphosphate biosynthesis via DXP pathway; isopentenyl diphosphate from 1-deoxy-D-xylulose 5-phosphate: step 6/6. Its function is as follows. Catalyzes the conversion of 1-hydroxy-2-methyl-2-(E)-butenyl 4-diphosphate (HMBPP) into a mixture of isopentenyl diphosphate (IPP) and dimethylallyl diphosphate (DMAPP). Acts in the terminal step of the DOXP/MEP pathway for isoprenoid precursor biosynthesis. The sequence is that of 4-hydroxy-3-methylbut-2-enyl diphosphate reductase from Prochlorococcus marinus (strain AS9601).